The chain runs to 150 residues: Actin-related protein 2/3 complex subunit 5-C (150 aa).

The segment at 21–45 (NKFVDEEEAGEGQQGPDEGEVDSAI) is disordered.

Belongs to the ARPC5 family. In terms of assembly, component of the Arp2/3 complex composed of actr2/arp2, actr3/arp3, arpc1 (arpc1a or arpc1b), arpc2, arpc3, arpc4 and arpc5.

It is found in the cytoplasm. The protein resides in the cytoskeleton. The protein localises to the cell projection. It localises to the nucleus. Component of the Arp2/3 complex, a multiprotein complex that mediates actin polymerization upon stimulation by nucleation-promoting factor (NPF). The Arp2/3 complex mediates the formation of branched actin networks in the cytoplasm, providing the force for cell motility. In addition to its role in the cytoplasmic cytoskeleton, the Arp2/3 complex also promotes actin polymerization in the nucleus, thereby regulating gene transcription and repair of damaged DNA. The Arp2/3 complex promotes homologous recombination (HR) repair in response to DNA damage by promoting nuclear actin polymerization, leading to drive motility of double-strand breaks (DSBs). This is Actin-related protein 2/3 complex subunit 5-C (arpc5-c) from Xenopus laevis (African clawed frog).